The sequence spans 154 residues: SsrA-binding protein (154 aa).

The interval 126-154 is disordered; sequence GKKKYDKREDMKKKEAQREVERAFRERQK. The span at 131 to 154 shows a compositional bias: basic and acidic residues; sequence DKREDMKKKEAQREVERAFRERQK.

The protein belongs to the SmpB family.

It is found in the cytoplasm. Required for rescue of stalled ribosomes mediated by trans-translation. Binds to transfer-messenger RNA (tmRNA), required for stable association of tmRNA with ribosomes. tmRNA and SmpB together mimic tRNA shape, replacing the anticodon stem-loop with SmpB. tmRNA is encoded by the ssrA gene; the 2 termini fold to resemble tRNA(Ala) and it encodes a 'tag peptide', a short internal open reading frame. During trans-translation Ala-aminoacylated tmRNA acts like a tRNA, entering the A-site of stalled ribosomes, displacing the stalled mRNA. The ribosome then switches to translate the ORF on the tmRNA; the nascent peptide is terminated with the 'tag peptide' encoded by the tmRNA and targeted for degradation. The ribosome is freed to recommence translation, which seems to be the essential function of trans-translation. This chain is SsrA-binding protein, found in Anoxybacillus flavithermus (strain DSM 21510 / WK1).